We begin with the raw amino-acid sequence, 342 residues long: Uroporphyrinogen decarboxylase (342 aa).

Substrate contacts are provided by residues 21 to 25 (RQAGR), Asp71, Tyr148, Ser203, and His316.

This sequence belongs to the uroporphyrinogen decarboxylase family. Homodimer.

The protein resides in the cytoplasm. It carries out the reaction uroporphyrinogen III + 4 H(+) = coproporphyrinogen III + 4 CO2. Its pathway is porphyrin-containing compound metabolism; protoporphyrin-IX biosynthesis; coproporphyrinogen-III from 5-aminolevulinate: step 4/4. Functionally, catalyzes the decarboxylation of four acetate groups of uroporphyrinogen-III to yield coproporphyrinogen-III. The polypeptide is Uroporphyrinogen decarboxylase (Campylobacter curvus (strain 525.92)).